The sequence spans 719 residues: DNA ligase (719 aa).

Residues 42–46 (DAAYD), 92–93 (SL), and E126 each bind NAD(+). K128 serves as the catalytic N6-AMP-lysine intermediate. NAD(+) contacts are provided by R149, E185, K301, and K325. Zn(2+) is bound by residues C430, C433, C448, and C454. One can recognise a BRCT domain in the interval 640–719 (ATGSPVEGKT…DDWFKLVGED (80 aa)).

The protein belongs to the NAD-dependent DNA ligase family. LigA subfamily. The cofactor is Mg(2+). Mn(2+) is required as a cofactor.

It catalyses the reaction NAD(+) + (deoxyribonucleotide)n-3'-hydroxyl + 5'-phospho-(deoxyribonucleotide)m = (deoxyribonucleotide)n+m + AMP + beta-nicotinamide D-nucleotide.. In terms of biological role, DNA ligase that catalyzes the formation of phosphodiester linkages between 5'-phosphoryl and 3'-hydroxyl groups in double-stranded DNA using NAD as a coenzyme and as the energy source for the reaction. It is essential for DNA replication and repair of damaged DNA. The chain is DNA ligase from Brucella melitensis biotype 1 (strain ATCC 23456 / CCUG 17765 / NCTC 10094 / 16M).